We begin with the raw amino-acid sequence, 158 residues long: Complexin-3 (158 aa).

The segment at 14–47 (KNLTGSLGGGEDKGDGDKSAAEAQGMSREEYEEY) is disordered. Over residues 23 to 33 (GEDKGDGDKSA) the composition is skewed to basic and acidic residues. Residues 39 to 74 (MSREEYEEYQKQLVEEKMERDAQFTQRKAERATLRS) adopt a coiled-coil conformation. A Cysteine methyl ester modification is found at C155. Residue C155 is the site of S-farnesyl cysteine attachment. A propeptide spans 156–158 (HIM) (removed in mature form).

Belongs to the complexin/synaphin family. Binds to the SNARE core complex containing SNAP25, VAMP2 and STX1A. In terms of processing, farnesylation mediates presynaptic targeting. In terms of tissue distribution, present in many brain regions, including hippocampus and cerebellum (at protein level). Expressed in the retina (at protein level). Expressed in retinal amacrine cells (at protein level). Expressed in retinal photoreceptor ribbon synapses. Expressed in the retinal inner nuclear layer, at bipolar cells (at protein level). Expressed in cone photoreceptor synaptic terminals (at protein level).

The protein resides in the synapse. The protein localises to the cell membrane. In terms of biological role, complexin that regulates SNARE protein complex-mediated synaptic vesicle fusion. Required for the maintenance of synaptic ultrastructure in the adult retina. Positively regulates synaptic transmission through synaptic vesicle availability and exocytosis of neurotransmitters at photoreceptor ribbon synapses in the retina. Suppresses tonic photoreceptor activity and baseline 'noise' by suppression of Ca(2+) vesicle tonic release and the facilitation of evoked synchronous and asynchronous Ca(2+) vesicle release. This is Complexin-3 (Cplx3) from Mus musculus (Mouse).